A 23-amino-acid polypeptide reads, in one-letter code: Phallacidin proprotein 1 (23 aa).

A propeptide is located at residue Pro-1. Positions 2-8 (AWLVDCP) form a cross-link, cyclopeptide (Ala-Pro). Residues 3-7 (WLVDC) constitute a cross-link (2'-cysteinyl-6'-hydroxytryptophan sulfoxide (Trp-Cys)). Residues 9 to 23 (CVGDDINRLLTRGEK) constitute a propeptide that is removed on maturation.

This sequence belongs to the MSDIN fungal toxin family. Processed by the macrocyclase-peptidase enzyme POPB to yield a toxic cyclic heptapeptide. POPB first removes 10 residues from the N-terminus. Conformational trapping of the remaining peptide forces the enzyme to release this intermediate rather than proceed to macrocyclization. The enzyme rebinds the remaining peptide in a different conformation and catalyzes macrocyclization of the N-terminal 7 residues.

Functionally, major toxin that belongs to the bicyclic heptapeptides called phallotoxins. Although structurally related to amatoxins, phallotoxins have a different mode of action, which is the stabilization of F-actin. Phallotoxins are poisonous when administered parenterally, but not orally because of poor absorption. The sequence is that of Phallacidin proprotein 1 from Amanita phalloides (Death cap).